The following is a 234-amino-acid chain: Small ribosomal subunit protein uS3 (234 aa).

Residues 39–107 (IRKFLKKELY…EVSINIKEVK (69 aa)) enclose the KH type-2 domain.

It belongs to the universal ribosomal protein uS3 family. As to quaternary structure, part of the 30S ribosomal subunit. Forms a tight complex with proteins S10 and S14.

In terms of biological role, binds the lower part of the 30S subunit head. Binds mRNA in the 70S ribosome, positioning it for translation. This Helicobacter pylori (strain P12) protein is Small ribosomal subunit protein uS3.